The primary structure comprises 227 residues: UPF0173 metal-dependent hydrolase Tlet_1100 (227 aa).

The protein belongs to the UPF0173 family.

The protein is UPF0173 metal-dependent hydrolase Tlet_1100 of Pseudothermotoga lettingae (strain ATCC BAA-301 / DSM 14385 / NBRC 107922 / TMO) (Thermotoga lettingae).